Here is a 137-residue protein sequence, read N- to C-terminus: Small ribosomal subunit protein bS16 (137 aa).

The protein belongs to the bacterial ribosomal protein bS16 family.

This Leuconostoc citreum (strain KM20) protein is Small ribosomal subunit protein bS16.